A 382-amino-acid polypeptide reads, in one-letter code: Type II secretion system protein L (382 aa).

Topologically, residues M1–R233 are cytoplasmic. The chain crosses the membrane as a helical span at residues P234–A254. Over W255–G382 the chain is Periplasmic.

The protein belongs to the GSP L family. Type II secretion system is composed of four main components: the outer membrane complex, the inner membrane complex, the cytoplasmic secretion ATPase and the periplasm-spanning pseudopilus. Forms homodimers. Interacts with XcpZ/GspM. Interacts with XcpR/GspE and XcpS/GspF.

Its subcellular location is the cell inner membrane. In terms of biological role, inner membrane component of the type II secretion system required for the energy-dependent secretion of extracellular factors such as proteases and toxins from the periplasm. Plays a role in the complex assembly and recruits XcpZ resulting in a stable complex in the inner membrane. Provides thus a link between the energy-providing XcpR protein in the cytoplasm and the rest of the T2SS machinery. This chain is Type II secretion system protein L (xcpY), found in Pseudomonas aeruginosa (strain ATCC 15692 / DSM 22644 / CIP 104116 / JCM 14847 / LMG 12228 / 1C / PRS 101 / PAO1).